The following is a 746-amino-acid chain: tRNA(Met) cytidine acetyltransferase TmcA (746 aa).

The interval 181–200 (ARAETGGNPPSPGDSACRTE) is disordered. ATP is bound by residues Q202, 228–237 (GRGKSAALGI), and R370. The N-acetyltransferase domain occupies 405 to 617 (VAVERLDRDA…VHLPHQLADP (213 aa)). Residues 517–519 (IAV), 524–530 (QGQGLGT), E557, and R564 each bind acetyl-CoA.

The protein belongs to the RNA cytidine acetyltransferase family. TmcA subfamily.

The protein localises to the cytoplasm. It catalyses the reaction cytidine(34) in elongator tRNA(Met) + acetyl-CoA + ATP + H2O = N(4)-acetylcytidine(34) in elongator tRNA(Met) + ADP + phosphate + CoA + H(+). Catalyzes the formation of N(4)-acetylcytidine (ac(4)C) at the wobble position of tRNA(Met), by using acetyl-CoA as an acetyl donor and ATP (or GTP). This is tRNA(Met) cytidine acetyltransferase TmcA from Nitrosococcus halophilus (strain Nc4).